A 29-amino-acid chain; its full sequence is Conotoxin pr6a (29 aa).

Intrachain disulfides connect Cys-2/Cys-20, Cys-9/Cys-24, and Cys-19/Cys-28.

As to expression, expressed by the venom duct.

It localises to the secreted. In terms of biological role, intraperitoneal injection into fish (1 nmol) provokes hyperactivity and erratic swimming in various directions after 14 minutes. This chain is Conotoxin pr6a, found in Conus parius (Cone snail).